Reading from the N-terminus, the 194-residue chain is Orotate phosphoribosyltransferase (194 aa).

116-124 (EDIVTTGLS) contributes to the 5-phospho-alpha-D-ribose 1-diphosphate binding site. Orotate contacts are provided by T120 and R148.

Belongs to the purine/pyrimidine phosphoribosyltransferase family. PyrE subfamily. In terms of assembly, homodimer. Mg(2+) serves as cofactor.

The enzyme catalyses orotidine 5'-phosphate + diphosphate = orotate + 5-phospho-alpha-D-ribose 1-diphosphate. The protein operates within pyrimidine metabolism; UMP biosynthesis via de novo pathway; UMP from orotate: step 1/2. Catalyzes the transfer of a ribosyl phosphate group from 5-phosphoribose 1-diphosphate to orotate, leading to the formation of orotidine monophosphate (OMP). This Phenylobacterium zucineum (strain HLK1) protein is Orotate phosphoribosyltransferase.